A 402-amino-acid polypeptide reads, in one-letter code: Serine/threonine-protein phosphatase 4 regulatory subunit 2 (402 aa).

Acidic residues predominate over residues 206–248; that stretch reads MDEEFEDEDYEDHEDEEEDEEDEDNDSDVDEMEAEEVEEDASD. Disordered stretches follow at residues 206 to 270, 291 to 311, and 331 to 402; these read MDEE…DVTD, SVLS…ILSR, and GFIT…KKRM. The segment covering 348–358 has biased composition (low complexity); the sequence is SSSSMVSPVVS. The segment covering 371–396 has biased composition (polar residues); sequence INTFISPDTTNSVTQAEKNELSTSPL.

Belongs to the PPP4R2 family. Regulatory subunit (R2) of the histone H2A phosphatase complex (HTP-C) consisting of PPH3, PSY2 and PSY4.

It is found in the nucleus. Its function is as follows. Regulatory subunit of the histone H2A phosphatase complex, which dephosphorylates H2AS128ph (gamma-H2A) that has been displaced from sites of DNA lesions in the double-stranded DNA break repair process. Dephosphorylation is necessary for efficient recovery from the DNA damage checkpoint. In Kluyveromyces lactis (strain ATCC 8585 / CBS 2359 / DSM 70799 / NBRC 1267 / NRRL Y-1140 / WM37) (Yeast), this protein is Serine/threonine-protein phosphatase 4 regulatory subunit 2 (PSY4).